We begin with the raw amino-acid sequence, 713 residues long: Transcription activator of gluconeogenesis CPC735_053490 (713 aa).

Residues 1-70 (MTANAINGPV…NAKDPLRPRR (70 aa)) form a disordered region. Polar residues predominate over residues 19 to 56 (GDNNKSADTTMADQGTRPESQPQGQNNGAKPQNGQTKP). Positions 77-105 (CFACQRAHLTCGDERPCQRCIKRGIQNAC) form a DNA-binding region, zn(2)-C6 fungal-type. The span at 145 to 159 (PLTRNGSNSKTNFYP) shows a compositional bias: polar residues. 4 disordered regions span residues 145-229 (PLTR…ASGQ), 274-318 (GAGE…LFGD), 541-564 (GGSS…GMDI), and 623-665 (GTTS…QRKW). Residues 160-171 (QQQSSFNNFYQN) are compositionally biased toward low complexity. Residues 191–212 (FPSQSPVSPTFNMTANPAASGN) are compositionally biased toward polar residues. The span at 213 to 229 (QGLPSSLSASNSNASGQ) shows a compositional bias: low complexity. 3 stretches are compositionally biased toward polar residues: residues 295–312 (SGTY…TGQP), 541–558 (GGSS…SFTP), and 649–659 (GASNGQSQHSL).

Belongs to the ERT1/acuK family.

The protein localises to the nucleus. Its function is as follows. Transcription factor which regulates nonfermentable carbon utilization. Activator of gluconeogenetic genes. The protein is Transcription activator of gluconeogenesis CPC735_053490 of Coccidioides posadasii (strain C735) (Valley fever fungus).